A 484-amino-acid polypeptide reads, in one-letter code: N-succinylglutamate 5-semialdehyde dehydrogenase (484 aa).

Glycine 221–glycine 226 is an NAD(+) binding site. Catalysis depends on residues glutamate 244 and cysteine 278.

This sequence belongs to the aldehyde dehydrogenase family. AstD subfamily.

It carries out the reaction N-succinyl-L-glutamate 5-semialdehyde + NAD(+) + H2O = N-succinyl-L-glutamate + NADH + 2 H(+). Its pathway is amino-acid degradation; L-arginine degradation via AST pathway; L-glutamate and succinate from L-arginine: step 4/5. Functionally, catalyzes the NAD-dependent reduction of succinylglutamate semialdehyde into succinylglutamate. This is N-succinylglutamate 5-semialdehyde dehydrogenase from Caulobacter sp. (strain K31).